Consider the following 307-residue polypeptide: Ornithine carbamoyltransferase (307 aa).

Carbamoyl phosphate-binding positions include 51–54 (STRT), Gln78, Arg102, and 129–132 (HPCQ). Residues Asn160, Asp220, and 224–225 (SM) contribute to the L-ornithine site. Residues 260-261 (CL) and Arg288 contribute to the carbamoyl phosphate site.

Belongs to the aspartate/ornithine carbamoyltransferase superfamily. OTCase family.

Its subcellular location is the cytoplasm. It catalyses the reaction carbamoyl phosphate + L-ornithine = L-citrulline + phosphate + H(+). Its pathway is amino-acid biosynthesis; L-arginine biosynthesis; L-arginine from L-ornithine and carbamoyl phosphate: step 1/3. Functionally, reversibly catalyzes the transfer of the carbamoyl group from carbamoyl phosphate (CP) to the N(epsilon) atom of ornithine (ORN) to produce L-citrulline. This is Ornithine carbamoyltransferase (argF) from Archaeoglobus fulgidus (strain ATCC 49558 / DSM 4304 / JCM 9628 / NBRC 100126 / VC-16).